Here is a 140-residue protein sequence, read N- to C-terminus: Small ribosomal subunit protein eS17x (140 aa).

The protein belongs to the eukaryotic ribosomal protein eS17 family.

The sequence is that of Small ribosomal subunit protein eS17x (RPS17C) from Arabidopsis thaliana (Mouse-ear cress).